We begin with the raw amino-acid sequence, 638 residues long: Asparagine--tRNA ligase, cytoplasmic 2 (638 aa).

Over residues 1-16 the composition is skewed to basic and acidic residues; it reads MESHGKTHQKEHDNDL. Disordered regions lie at residues 1–23 and 62–87; these read MESH…PITL and VKKN…DQAH.

It belongs to the class-II aminoacyl-tRNA synthetase family.

It localises to the cytoplasm. Its subcellular location is the cytosol. The catalysed reaction is tRNA(Asn) + L-asparagine + ATP = L-asparaginyl-tRNA(Asn) + AMP + diphosphate + H(+). This chain is Asparagine--tRNA ligase, cytoplasmic 2, found in Arabidopsis thaliana (Mouse-ear cress).